The following is a 147-amino-acid chain: Hemoglobin subunit gamma (147 aa).

The Globin domain maps to 3–147 (HFTAEEKAII…VATALAHKYH (145 aa)). 2 residues coordinate heme b: His64 and His93.

The protein belongs to the globin family. Heterotetramer of two alpha chains and two gamma chains in fetal hemoglobin (Hb F). As to expression, red blood cells.

Gamma chains make up the fetal hemoglobin F, in combination with alpha chains. This Otolemur crassicaudatus (Brown greater galago) protein is Hemoglobin subunit gamma (HBG).